Here is a 61-residue protein sequence, read N- to C-terminus: Large ribosomal subunit protein eL37 (61 aa).

The Zn(2+) site is built by C19, C22, C34, and C37. The C4-type zinc finger occupies 19–37; it reads CRRCGRNAYNVSKHYCAAC.

This sequence belongs to the eukaryotic ribosomal protein eL37 family. Zn(2+) serves as cofactor.

Binds to the 23S rRNA. The chain is Large ribosomal subunit protein eL37 (rpl37e) from Saccharolobus solfataricus (strain ATCC 35092 / DSM 1617 / JCM 11322 / P2) (Sulfolobus solfataricus).